The chain runs to 520 residues: Calcium-dependent protein kinase 25 (520 aa).

Gly-2 carries N-myristoyl glycine lipidation. A disordered region spans residues 31 to 87 (PLKPQLQDKPPQPMLMNKDDDKTKLNDTHGDPKLLEGKEKPAQKQTSQGQGGRKCSD). Positions 47–72 (NKDDDKTKLNDTHGDPKLLEGKEKPA) are enriched in basic and acidic residues. One can recognise a Protein kinase domain in the interval 132–390 (YNLGSKLGHG…AQQVLCHPWI (259 aa)). ATP-binding positions include 138 to 146 (LGHGQFGTT) and Lys-161. The active-site Proton acceptor is the Asp-256. Position 296 is a phosphoserine (Ser-296). The segment at 396–426 (APDTPLDTTVLSRLKKFSATDKLKKMALRVI) is autoinhibitory domain. Residues 433 to 468 (EEIHELRETFKTIDSGKSGRVTYKELKNGLERFNTN) form the EF-hand 1 domain. Ca(2+)-binding residues include Asp-446, Ser-450, Arg-452, Glu-457, Asp-483, Glu-487, Thr-489, and Glu-494. One can recognise an EF-hand 2; degenerate domain in the interval 469–505 (LDNSDINSLMQIPTDVHLEDTVDYNEFIEAIVRLRQI).

It belongs to the protein kinase superfamily. Ser/Thr protein kinase family. CDPK subfamily.

Its subcellular location is the membrane. The catalysed reaction is L-seryl-[protein] + ATP = O-phospho-L-seryl-[protein] + ADP + H(+). It catalyses the reaction L-threonyl-[protein] + ATP = O-phospho-L-threonyl-[protein] + ADP + H(+). Activated by calcium. Autophosphorylation may play an important role in the regulation of the kinase activity. Functionally, may play a role in signal transduction pathways that involve calcium as a second messenger. The protein is Calcium-dependent protein kinase 25 (CPK25) of Arabidopsis thaliana (Mouse-ear cress).